The following is a 150-amino-acid chain: Guanine nucleotide-binding protein subunit gamma 2 (150 aa).

The span at 1 to 11 (MRGEANGEEEQ) shows a compositional bias: acidic residues. A disordered region spans residues 1–59 (MRGEANGEEEQQPPRRNHLRDDAEEEEEVERRAARPVSGQQQQQQRRRPTDVGGGAAMR). Positions 65–97 (GKHRLSAAIARLDQELQSLQDELNELETMEPAS) form a coiled coil. A G protein gamma domain is found at 71-137 (AAIARLDQEL…RWFQRVRSSR (67 aa)).

In terms of assembly, g proteins are composed of 3 units, alpha, beta and gamma. Interacts with the beta subunit RGB1.

It is found in the cell membrane. Functionally, guanine nucleotide-binding proteins (G proteins) are involved as modulators or transducers in various transmembrane signaling systems. This chain is Guanine nucleotide-binding protein subunit gamma 2, found in Oryza sativa subsp. indica (Rice).